Consider the following 325-residue polypeptide: GMP reductase (325 aa).

C174 (thioimidate intermediate) is an active-site residue. NADP(+) is bound at residue 203–226; it reads IIADGGIRTNGDIAKSIRFGANMV.

The protein belongs to the IMPDH/GMPR family. GuaC type 2 subfamily.

It carries out the reaction IMP + NH4(+) + NADP(+) = GMP + NADPH + 2 H(+). Its function is as follows. Catalyzes the irreversible NADPH-dependent deamination of GMP to IMP. It functions in the conversion of nucleobase, nucleoside and nucleotide derivatives of G to A nucleotides, and in maintaining the intracellular balance of A and G nucleotides. The sequence is that of GMP reductase from Latilactobacillus sakei subsp. sakei (strain 23K) (Lactobacillus sakei subsp. sakei).